The chain runs to 1006 residues: DNA polymerase (1006 aa).

Belongs to the DNA polymerase type-B family. As to quaternary structure, interacts with OPG148. Component of the Uracil-DNA glycosylase(UDG)-OPG148-polymerase complex; OPG148 and OPG116/UDG form a heterodimeric processivity factor that associates with OPG071 to form the processive polymerase holoenzyme.

The enzyme catalyses DNA(n) + a 2'-deoxyribonucleoside 5'-triphosphate = DNA(n+1) + diphosphate. Catalyzes DNA synthesis. Acquires processivity by associating with a heterodimeric processivity factor comprised of the viral OPG148 and OPG116 proteins, thereby forming the DNA polymerase holoenzyme. Displays 3'- to 5' exonuclease activity. Might participate in viral DNA recombination. Does not perform OPG116/D4synthesis across an abasic site. In Monkeypox virus, this protein is DNA polymerase (OPG071).